The following is a 261-amino-acid chain: Imidazole glycerol phosphate synthase subunit HisF (261 aa).

Residues Asp-11 and Asp-130 contribute to the active site.

The protein belongs to the HisA/HisF family. Heterodimer of HisH and HisF.

Its subcellular location is the cytoplasm. The catalysed reaction is 5-[(5-phospho-1-deoxy-D-ribulos-1-ylimino)methylamino]-1-(5-phospho-beta-D-ribosyl)imidazole-4-carboxamide + L-glutamine = D-erythro-1-(imidazol-4-yl)glycerol 3-phosphate + 5-amino-1-(5-phospho-beta-D-ribosyl)imidazole-4-carboxamide + L-glutamate + H(+). The protein operates within amino-acid biosynthesis; L-histidine biosynthesis; L-histidine from 5-phospho-alpha-D-ribose 1-diphosphate: step 5/9. Functionally, IGPS catalyzes the conversion of PRFAR and glutamine to IGP, AICAR and glutamate. The HisF subunit catalyzes the cyclization activity that produces IGP and AICAR from PRFAR using the ammonia provided by the HisH subunit. This Heliobacterium modesticaldum (strain ATCC 51547 / Ice1) protein is Imidazole glycerol phosphate synthase subunit HisF.